A 946-amino-acid chain; its full sequence is Bifunctional glutamine synthetase adenylyltransferase/adenylyl-removing enzyme (946 aa).

Residues 1-440 (MKPLSSPLQQ…VFNELIGDDE (440 aa)) are adenylyl removase. The adenylyl transferase stretch occupies residues 449-946 (SEQWRELWQD…ASWQKWLVEE (498 aa)).

This sequence belongs to the GlnE family. Mg(2+) is required as a cofactor.

It catalyses the reaction [glutamine synthetase]-O(4)-(5'-adenylyl)-L-tyrosine + phosphate = [glutamine synthetase]-L-tyrosine + ADP. It carries out the reaction [glutamine synthetase]-L-tyrosine + ATP = [glutamine synthetase]-O(4)-(5'-adenylyl)-L-tyrosine + diphosphate. In terms of biological role, involved in the regulation of glutamine synthetase GlnA, a key enzyme in the process to assimilate ammonia. When cellular nitrogen levels are high, the C-terminal adenylyl transferase (AT) inactivates GlnA by covalent transfer of an adenylyl group from ATP to specific tyrosine residue of GlnA, thus reducing its activity. Conversely, when nitrogen levels are low, the N-terminal adenylyl removase (AR) activates GlnA by removing the adenylyl group by phosphorolysis, increasing its activity. The regulatory region of GlnE binds the signal transduction protein PII (GlnB) which indicates the nitrogen status of the cell. In Shigella boydii serotype 4 (strain Sb227), this protein is Bifunctional glutamine synthetase adenylyltransferase/adenylyl-removing enzyme.